A 75-amino-acid polypeptide reads, in one-letter code: Large ribosomal subunit protein bL28 (75 aa).

This sequence belongs to the bacterial ribosomal protein bL28 family.

This is Large ribosomal subunit protein bL28 from Baumannia cicadellinicola subsp. Homalodisca coagulata.